We begin with the raw amino-acid sequence, 654 residues long: MKLSLVAAVLLLLCAARAEEEDKKEDVGTVVGIDLGTTYSCVGVFKNGRVEIIANDQGNRITPSYVAFTPEGERLIGDAAKNQLTSNPENTVFDAKRLIGRTWNDPSVQQDIKFLPFKVVEKKTKPYIQVDIGGGQTKTFAPEEISAMVLTKMKETAEAYLGKKVTHAVVTVPAYFNDAQRQATKDAGTIAGLNVMRIINEPTAAAIAYGLDKREGEKNILVFDLGGGTFDVSLLTIDNGVFEVVATNGDTHLGGEDFDQRVMEHFIKLYKKKTGKDVRKDNRAVQKLRREVEKAKRALSSQHQARIEIESFYEGEDFSETLTRAKFEELNMDLFRSTMKPVQKVLEDSDLKKSDIDEIVLVGGSTRIPKIQQLVKEFFNGKEPSRGINPDEAVAYGAAVQAGVLSGDQDTGDLVLLDVCPLTLGIETVGGVMTKLIPRNTVVPTKKSQISSTASDNQPTVTIKVYEGERPLTKDNHLLGTFDLTGIPPAPRGVPQIEVTFEIDVNGILRVTAEDKGTGNKNKITITNDQNRLTPEEIERMVNDAEKFAEEDKRLKERIDTRNELESYAYSLKNQIGDKEKLGGKLSSEDKETMEKAVEEKIEWLESHQDADIEDFKAKKKELEEIVQPIISKLYGSAGPPPTGEEDTSERDEL.

Residues M1–A18 form the signal peptide. The interval M1–A80 is required for interaction with ELAPOR1. G36–Y39 lines the ATP pocket. Residue S86 is modified to Phosphoserine. Residue K96 coordinates ATP. K125 is subject to N6-acetyllysine. A nucleotide-binding (NBD) region spans residues K125–K280. Position 160 is a 3'-nitrotyrosine (Y160). The residue at position 213 (K213) is an N6-acetyllysine. G227–T229 serves as a coordination point for ATP. K271 carries the post-translational modification N6-acetyllysine. Residue E293–S300 participates in ATP binding. K326 is subject to N6-acetyllysine. A Glycyl lysine isopeptide (Lys-Gly) (interchain with G-Cter in SUMO2) cross-link involves residue K352. K353 bears the N6-acetyllysine; alternate mark. K353 participates in a covalent cross-link: Glycyl lysine isopeptide (Lys-Gly) (interchain with G-Cter in SUMO1); alternate. ATP is bound at residue G364 to R367. An interdomain linker region spans residues Q409–V419. Residues C420 to T500 are substrate-binding (SBD). K447 carries the N6-succinyllysine modification. R492 bears the Omega-N-methylarginine mark. Residue T518 is modified to O-AMP-threonine; alternate. Phosphothreonine; alternate is present on T518. K585 carries the post-translational modification N6,N6,N6-trimethyllysine; by METTL21A; in vitro. K585 is subject to N6,N6-dimethyllysine; alternate. K585 is modified (N6-methyllysine; alternate). K591 carries the N6-methyllysine modification. Positions S632–L654 are disordered. 2 positions are modified to phosphothreonine: T643 and T648. Over residues G644–L654 the composition is skewed to acidic residues. Residue S649 is modified to Phosphoserine. Positions R651–L654 match the Prevents secretion from ER motif.

The protein belongs to the heat shock protein 70 family. Monomer and homooligomer; homooligomerization via the interdomain linker inactivates the chaperone activity and acts as a storage of HSPA5/BiP molecules. Interacts with DNAJC1 (via J domain). Component of an EIF2 complex at least composed of CELF1/CUGBP1, CALR, CALR3, EIF2S1, EIF2S2, HSP90B1 and HSPA5. Part of a large chaperone multiprotein complex comprising DNAJB11, HSP90B1, HSPA5, HYOU, PDIA2, PDIA4, PDIA6, PPIB, SDF2L1, UGGT1 and very small amounts of ERP29, but not, or at very low levels, CALR nor CANX. Interacts with TMEM132A and TRIM21. May form a complex with ERLEC1, OS9, SEL1L and SYVN1. Interacts with DNAJC10. Interacts with DNAJB9/ERdj4; leading to recruit HSPA5/BiP to ERN1/IRE1. Interacts with ERN1/IRE1 (via luminal domain); the interaction takes place following interaction with DNAJB9/ERdj4 and leads to inactivate ERN1/IRE1, the interaction also competitively inhibits ERN1 interaction with MANF. Interacts directly with MANF (via SAP domain); the interaction inhibits ATP binding to HSPA5/BiP and subsequent nucleotide exchange. Interacts with EIF2AK3/PERK (via luminal domain); interaction leads to inactivate EIF2AK3/PERK. Interacts with MX1. Interacts with METTL23. Interacts with CEMIP; the interaction induces calcium leakage from the endoplasmic reticulum and cell migration. Interacts with PCSK4 form; the interaction takes place in the endoplasmic reticulum. Interacts with CIPC. Interacts with CCDC88B (via C-terminus); the interaction opposes ERN1-mediated JNK activation, protecting against apoptosis. Interacts with INPP5K; necessary for INPP5K localization at the endoplasmic reticulum. Interacts with MANF; the interaction is direct. Interacts with LOXL2; leading to activate the ERN1/IRE1-XBP1 pathway of the unfolded protein response. Interacts with CLU under stressed condition; interaction increases CLU protein stability; facilitates its retrotranslocation and redistribution to the mitochondria; cooperatively suppress stress-induced apoptosis by stabilizing mitochondrial membrane integrity. Interacts with CCDC47. Interacts with CLN3. Interacts with ELAPOR1; may regulate the function of HSPA5 in apoptosis and cell proliferation. Interacts with CASP7. Interacts with ILDR2; the interaction stabilizes ILDR2 expression. Interacts with ADAM7. Post-translationally, in unstressed cells, AMPylation at Thr-518 by FICD inactivates the chaperome activity: AMPylated form is locked in a relatively inert state and only weakly stimulated by J domain-containing proteins. In response to endoplasmic reticulum stress, de-AMPylation by the same protein, FICD, restores the chaperone activity.

It is found in the endoplasmic reticulum lumen. It localises to the melanosome. The protein localises to the cytoplasm. The protein resides in the cell surface. It catalyses the reaction ATP + H2O = ADP + phosphate + H(+). Its activity is regulated as follows. The chaperone activity is regulated by ATP-induced allosteric coupling of the nucleotide-binding (NBD) and substrate-binding (SBD) domains. In the ADP-bound and nucleotide-free (apo) states, the two domains have little interaction. In contrast, in the ATP-bound state the two domains are tightly coupled, which results in drastically accelerated kinetics in both binding and release of polypeptide substrates. J domain-containing co-chaperones (DNAJB9/ERdj4 or DNAJC10/ERdj5) stimulate the ATPase activity and are required for efficient substrate recognition by HSPA5/BiP. Homooligomerization inactivates participating HSPA5/BiP protomers and probably act as reservoirs to store HSPA5/BiP molecules when they are not needed by the cell. In terms of biological role, endoplasmic reticulum chaperone that plays a key role in protein folding and quality control in the endoplasmic reticulum lumen. Involved in the correct folding of proteins and degradation of misfolded proteins via its interaction with DNAJC10/ERdj5, probably to facilitate the release of DNAJC10/ERdj5 from its substrate. Acts as a key repressor of the EIF2AK3/PERK and ERN1/IRE1-mediated unfolded protein response (UPR). In the unstressed endoplasmic reticulum, recruited by DNAJB9/ERdj4 to the luminal region of ERN1/IRE1, leading to disrupt the dimerization of ERN1/IRE1, thereby inactivating ERN1/IRE1. Also binds and inactivates EIF2AK3/PERK in unstressed cells. Accumulation of misfolded protein in the endoplasmic reticulum causes release of HSPA5/BiP from ERN1/IRE1 and EIF2AK3/PERK, allowing their homodimerization and subsequent activation. Plays an auxiliary role in post-translational transport of small presecretory proteins across endoplasmic reticulum (ER). May function as an allosteric modulator for SEC61 channel-forming translocon complex, likely cooperating with SEC62 to enable the productive insertion of these precursors into SEC61 channel. Appears to specifically regulate translocation of precursors having inhibitory residues in their mature region that weaken channel gating. May also play a role in apoptosis and cell proliferation. The protein is Endoplasmic reticulum chaperone BiP of Ictidomys tridecemlineatus (Thirteen-lined ground squirrel).